Consider the following 399-residue polypeptide: Na(+)/H(+) antiporter NhaA (399 aa).

Helical transmembrane passes span 14-34 (AGGI…NSPL), 59-79 (LIHW…GLEV), 95-115 (SLPT…YLLF), 124-144 (AGWA…MALL), 154-174 (VFLL…IAMF), 177-197 (TDLS…LVGL), 213-233 (LILW…GVII), 261-281 (FIIL…PMSF), 290-310 (VGIA…FSYI), 331-351 (VALM…LAFV), and 363-383 (LGIL…LAKV).

The protein belongs to the NhaA Na(+)/H(+) (TC 2.A.33) antiporter family.

The protein resides in the cell inner membrane. It carries out the reaction Na(+)(in) + 2 H(+)(out) = Na(+)(out) + 2 H(+)(in). Na(+)/H(+) antiporter that extrudes sodium in exchange for external protons. In Shewanella sediminis (strain HAW-EB3), this protein is Na(+)/H(+) antiporter NhaA.